The chain runs to 301 residues: MNGTLTHLQQLEAESIHIIREVVAEFANPVMLYSIGKDSAVMLHLARKAFFPAPPPFPLLHVDTTWKFREMIQFRDRMAAECGLDLIVHVNEEGVKNGISPFTHGSALYTDVMKTEGLKQALDKYKFDAAFGGARRDEEKSRAKERIFSFRCTNHRWDPKNQRPELWNLYNTRIKPGESIRVFPLSNWTELDVWQYIHLENIPIVPLYYAAVRPVVERDGMLIMVDDERLELKPGEKVQYKSVRFRTLGCYPLTGAVESTADTLPQIIQEMLLTRTSERQGRLIDHDQDGSMEKKKQEGYF.

The segment at 279 to 301 (RQGRLIDHDQDGSMEKKKQEGYF) is disordered.

The protein belongs to the PAPS reductase family. CysD subfamily. In terms of assembly, heterodimer composed of CysD, the smaller subunit, and CysN.

It carries out the reaction sulfate + ATP + H(+) = adenosine 5'-phosphosulfate + diphosphate. It participates in sulfur metabolism; hydrogen sulfide biosynthesis; sulfite from sulfate: step 1/3. With CysN forms the ATP sulfurylase (ATPS) that catalyzes the adenylation of sulfate producing adenosine 5'-phosphosulfate (APS) and diphosphate, the first enzymatic step in sulfur assimilation pathway. APS synthesis involves the formation of a high-energy phosphoric-sulfuric acid anhydride bond driven by GTP hydrolysis by CysN coupled to ATP hydrolysis by CysD. This is Sulfate adenylyltransferase subunit 2 from Geotalea uraniireducens (strain Rf4) (Geobacter uraniireducens).